Consider the following 195-residue polypeptide: Ras-related protein Rab-31 (195 aa).

Gly-16, Gly-18, Lys-19, Ser-20, Ser-21, Asp-32, and His-33 together coordinate GTP. Ser-20 is a binding site for Mg(2+). 2 consecutive short sequence motifs (switch) follow at residues 30-42 (HFDHNISPTIGAS) and 63-79 (AGQERFHSLAPMYYRGS). Position 36 is a phosphoserine (Ser-36). GTP is bound by residues Thr-38, Gly-64, Asn-119, Asp-122, Ala-150, and Lys-151. Thr-38 serves as a coordination point for Mg(2+). The segment at 168 to 195 (PPLGPQENGNSGGIKLGNQSLQASRRCC) is disordered. Over residues 184-195 (GNQSLQASRRCC) the composition is skewed to polar residues. Residues Cys-194 and Cys-195 are each lipidated (S-geranylgeranyl cysteine).

Belongs to the small GTPase superfamily. Rab family. In terms of assembly, interacts with OCRL. Interacts (in GDP-bound form) with RIN3 and GAPVD1, which function as guanine exchange factors (GEF). Interacts with EGFR. Interacts with NGFR. Interacts (in GTP-bound form) with EEA1. Interacts (in GTP-bound form) with APPL2; interaction contributes to or enhances recruitment of APPL2 to the phagosomes; interaction enhances Fc-gamma receptor-mediated phagocytosis through PI3K/Akt signaling in macrophages. Mg(2+) is required as a cofactor. As to expression, detected in brain astrocytes (at protein level).

Its subcellular location is the early endosome. It is found in the golgi apparatus. The protein localises to the trans-Golgi network. The protein resides in the trans-Golgi network membrane. It localises to the cytoplasmic vesicle. Its subcellular location is the phagosome. It is found in the phagosome membrane. It catalyses the reaction GTP + H2O = GDP + phosphate + H(+). With respect to regulation, regulated by guanine nucleotide exchange factors (GEFs) including RIN3 and GAPVD1 which promote the exchange of bound GDP for free GTP. Regulated by GTPase activating proteins (GAPs) which increase the GTP hydrolysis activity. Inhibited by GDP dissociation inhibitors (GDIs) which prevent Rab-GDP dissociation. Its function is as follows. The small GTPases Rab are key regulators of intracellular membrane trafficking, from the formation of transport vesicles to their fusion with membranes. Rabs cycle between an inactive GDP-bound form and an active GTP-bound form that is able to recruit to membranes different set of downstream effectors directly responsible for vesicle formation, movement, tethering and fusion. Required for the integrity and for normal function of the Golgi apparatus and the trans-Golgi network. Plays a role in insulin-stimulated translocation of GLUT4 to the cell membrane. Plays a role in the maturation of phagosomes that engulf pathogens, such as S.aureus and Mycobacterium. Plays a role in M6PR transport from the trans-Golgi network to endosomes. Plays a role in the internalization of EGFR from the cell membrane into endosomes. This is Ras-related protein Rab-31 from Mus musculus (Mouse).